We begin with the raw amino-acid sequence, 48 residues long: Large ribosomal subunit protein bL33B (48 aa).

Belongs to the bacterial ribosomal protein bL33 family.

This chain is Large ribosomal subunit protein bL33B (rpmG 2), found in Mycoplasmoides gallisepticum (strain R(low / passage 15 / clone 2)) (Mycoplasma gallisepticum).